The primary structure comprises 436 residues: Coiled-coil domain-containing protein 71 (436 aa).

The tract at residues 95-119 is disordered; it reads ATSLPARAPQTAKSVPTGQTTLLPV. A compositionally biased stretch (polar residues) spans 105 to 116; that stretch reads TAKSVPTGQTTL. Residue S129 is modified to Phosphoserine. 2 disordered regions span residues 210–258 and 314–405; these read LRKG…MKGR and ALRG…KVDR. A coiled-coil region spans residues 264–334; the sequence is KTVRGKAPRT…QAKAKAARTK (71 aa). The segment covering 329–340 has biased composition (basic residues); that stretch reads KAARTKHKKRPK. Over residues 344-359 the composition is skewed to polar residues; sequence QTRTGRTSLKNSSETV. Positions 373–386 are enriched in basic residues; that stretch reads PPKKRARCVPRSKA.

The protein is Coiled-coil domain-containing protein 71 (Ccdc71) of Rattus norvegicus (Rat).